Reading from the N-terminus, the 471-residue chain is Argininosuccinate lyase (471 aa).

Belongs to the lyase 1 family. Argininosuccinate lyase subfamily.

It is found in the cytoplasm. The catalysed reaction is 2-(N(omega)-L-arginino)succinate = fumarate + L-arginine. The protein operates within amino-acid biosynthesis; L-arginine biosynthesis; L-arginine from L-ornithine and carbamoyl phosphate: step 3/3. The protein is Argininosuccinate lyase of Parasynechococcus marenigrum (strain WH8102).